We begin with the raw amino-acid sequence, 396 residues long: Major outer membrane porin, serovar A (396 aa).

The signal sequence occupies residues 1–22 (MKKLLKSVLVFAALSSASSLQA).

It belongs to the chlamydial porin (CP) (TC 1.B.2) family. As to quaternary structure, part of a disulfide cross-linked outer membrane complex (COMC) composed of the major outer membrane porin (MOMP), the small cysteine-rich protein (OmcA) and the large cysteine-rich periplasmic protein (OmcB).

Its subcellular location is the cell outer membrane. In elementary bodies (EBs, the infectious stage, which is able to survive outside the host cell) provides the structural integrity of the outer envelope through disulfide cross-links with the small cysteine-rich protein and the large cysteine-rich periplasmic protein. It has been described in publications as the Sarkosyl-insoluble COMC (Chlamydia outer membrane complex), and serves as the functional equivalent of peptidoglycan. Its function is as follows. Permits diffusion of specific solutes through the outer membrane. The chain is Major outer membrane porin, serovar A (ompA) from Chlamydia trachomatis.